We begin with the raw amino-acid sequence, 258 residues long: UPF0246 protein VV0659 (258 aa).

Belongs to the UPF0246 family.

The polypeptide is UPF0246 protein VV0659 (Vibrio vulnificus (strain YJ016)).